Reading from the N-terminus, the 646-residue chain is MGLPRLVCAFLLAACCCCPRVAGVPGEAEQPAPELVEVEVGSTALLKCGLSQSQGNLSHVDWFSVHKEKRTLIFRVRQGQGQSEPGEYEQRLSLQDRGATLALTQVTPQDERIFLCQGKRPRSQEYRIQLRVYKAPEEPNIQVNPLGIPVNSKEPEEVATCVGRNGYPIPQVIWYKNGRPLKEEKNRVHIQSSQTVESSGLYTLQSILKAQLVKEDKDAQFYCELNYRLPSGNHMKESREVTVPVFYPTEKVWLEVEPVGMLKEGDRVEIRCLADGNPPPHFSISKQNPSTREAEEETTNDNGVLVLEPARKEHSGRYECQGLDLDTMISLLSEPQELLVNYVSDVRVSPAAPERQEGSSLTLTCEAESSQDLEFQWLREETGQVLERGPVLQLHDLKREAGGGYRCVASVPSIPGLNRTQLVNVAIFGPPWMAFKERKVWVKENMVLNLSCEASGHPRPTISWNVNGTASEQDQDPQRVLSTLNVLVTPELLETGVECTASNDLGKNTSILFLELVNLTTLTPDSNTTTGLSTSTASPHTRANSTSTERKLPEPESRGVVIVAVIVCILVLAVLGAVLYFLYKKGKLPCRRSGKQEITLPPSRKSELVVEVKSDKLPEEMGLLQGSSGDKRAPGDQGEKYIDLRH.

A signal peptide spans 1–23; sequence MGLPRLVCAFLLAACCCCPRVAG. 2 Ig-like V-type domains span residues 24–129 and 139–242; these read VPGE…YRIQ and PNIQ…REVT. Residues 24 to 559 lie on the Extracellular side of the membrane; it reads VPGEAEQPAP…RKLPEPESRG (536 aa). 4 disulfide bridges follow: cysteine 48–cysteine 116, cysteine 161–cysteine 223, cysteine 272–cysteine 320, and cysteine 365–cysteine 407. N-linked (GlcNAc...) asparagine glycosylation occurs at asparagine 56. Ig-like C2-type domains follow at residues 244 to 330, 335 to 424, and 430 to 510; these read PVFY…TMIS, PQEL…QLVN, and PPWM…KNTS. Residues 278–299 are disordered; that stretch reads PPPHFSISKQNPSTREAEEETT. 7 N-linked (GlcNAc...) asparagine glycosylation sites follow: asparagine 418, asparagine 449, asparagine 467, asparagine 508, asparagine 518, asparagine 527, and asparagine 544. The cysteines at positions 452 and 499 are disulfide-linked. The interval 525–554 is disordered; it reads DSNTTTGLSTSTASPHTRANSTSTERKLPE. Residues 533–547 show a composition bias toward polar residues; it reads STSTASPHTRANSTS. The chain crosses the membrane as a helical span at residues 560-583; the sequence is VVIVAVIVCILVLAVLGAVLYFLY. The Cytoplasmic portion of the chain corresponds to 584-646; the sequence is KKGKLPCRRS…QGEKYIDLRH (63 aa). 3 positions are modified to phosphoserine: serine 606, serine 614, and serine 628. The disordered stretch occupies residues 620–646; that stretch reads EMGLLQGSSGDKRAPGDQGEKYIDLRH. Residues 629–646 show a composition bias toward basic and acidic residues; the sequence is GDKRAPGDQGEKYIDLRH.

Detected in endothelial cells in vascular tissue throughout the body. May appear at the surface of neural crest cells during their embryonic migration. Appears to be limited to vascular smooth muscle in normal adult tissues. Associated with tumor progression and the development of metastasis in human malignant melanoma. Expressed most strongly on metastatic lesions and advanced primary tumors and is only rarely detected in benign melanocytic nevi and thin primary melanomas with a low probability of metastasis.

Its subcellular location is the membrane. Plays a role in cell adhesion, and in cohesion of the endothelial monolayer at intercellular junctions in vascular tissue. Its expression may allow melanoma cells to interact with cellular elements of the vascular system, thereby enhancing hematogeneous tumor spread. Could be an adhesion molecule active in neural crest cells during embryonic development. Acts as a surface receptor that triggers tyrosine phosphorylation of FYN and PTK2/FAK1, and a transient increase in the intracellular calcium concentration. The sequence is that of Cell surface glycoprotein MUC18 (MCAM) from Homo sapiens (Human).